We begin with the raw amino-acid sequence, 95 residues long: UPF0235 protein Swoo_1329 (95 aa).

The protein belongs to the UPF0235 family.

This Shewanella woodyi (strain ATCC 51908 / MS32) protein is UPF0235 protein Swoo_1329.